Consider the following 407-residue polypeptide: Transcriptional regulator UL34 (407 aa).

2 disordered regions span residues Ala268–Phe330 and Ser388–Ile407. A compositionally biased stretch (acidic residues) spans Glu273–Asp286. Residues Glu287–Lys301 show a composition bias toward basic and acidic residues. Positions Pro302–Val312 are enriched in basic residues.

The protein belongs to the HHV-5 UL34 protein family.

Its subcellular location is the host nucleus. In terms of biological role, acts as a transcriptional repressor of the US3 gene expression through a specific DNA sequence named the transcriptional repressive element (tre). The polypeptide is Transcriptional regulator UL34 (UL34) (Human cytomegalovirus (strain Towne) (HHV-5)).